The primary structure comprises 170 residues: Metalloproteinase inhibitor 4 (170 aa).

An NTR domain is found at 1–105; the sequence is ISSEKVVPAS…SLNHHYHLNC (105 aa). 2 involved in metalloproteinase-binding regions span residues 6 to 9 and 48 to 49; these read VVPA and SS. 3 disulfide bridges follow: Cys107–Cys154, Cys112–Cys117, and Cys125–Cys146.

Belongs to the protease inhibitor I35 (TIMP) family.

The protein resides in the secreted. Complexes with metalloproteinases (such as collagenases) and irreversibly inactivates them by binding to their catalytic zinc cofactor. The chain is Metalloproteinase inhibitor 4 (TIMP4) from Oryctolagus cuniculus (Rabbit).